The following is a 488-amino-acid chain: Ammonium transporter Rh type C-like 2 (488 aa).

Topologically, residues 1–21 (MGNCFGSRGICDRPKNTNIRL) are cytoplasmic. Residues 22-42 (SLPAVCFVWQVSMIILFGVFV) traverse the membrane as a helical segment. Residues 43-73 (RYNEEADTNWVYTKKEKNITSDIENDFYFRY) lie on the Extracellular side of the membrane. N60 carries an N-linked (GlcNAc...) asparagine glycan. Residues 74–94 (PSFQDVHVMIFVGFGFLMTFL) form a helical membrane-spanning segment. Topologically, residues 95–98 (KRYS) are cytoplasmic. A helical membrane pass occupies residues 99-119 (FGAVGFNFLIAAFGLQWALLM). The Extracellular portion of the chain corresponds to 120-139 (QGWFSPLGDDGKIKIGIENL). A helical transmembrane segment spans residues 140-160 (INADFCVASCLIAYGAVLGKV). Residues 161-162 (SP) are Cytoplasmic-facing. The helical transmembrane segment at 163–183 (VQLLVMTLFGITLYAVEEFII) threads the bilayer. The Extracellular segment spans residues 184–191 (LRVLNAKD). A helical membrane pass occupies residues 192 to 214 (AGGSMVIHTFGAYYGLSISRVLY). The Cytoplasmic segment spans residues 215–232 (RPNLNKSKHMNGSVYHSD). A helical membrane pass occupies residues 233–253 (VFAMIGTLFLWMFWPSFNSAI). Topologically, residues 254 to 264 (CNHGDGQHRAA) are extracellular. A helical transmembrane segment spans residues 265 to 285 (INTYLALASTVLTTVAISSMF). At 286–298 (EKTGKLDMVHIQN) the chain is on the cytoplasmic side. Residues 299–319 (STLAGGVAVGTAAEFMLMPYG) traverse the membrane as a helical segment. S320 is a topological domain (extracellular). The helical transmembrane segment at 321–341 (LIVGFFCGIISTLGYIYLTPF) threads the bilayer. Topologically, residues 342–356 (LEERLKIQDTCGIHN) are cytoplasmic. The helical transmembrane segment at 357 to 377 (LHAMPGVIGGIVGAISAAAAS) threads the bilayer. At 378 to 409 (KEVYGDLGLKNIFSIEGSNVTRLPTVQGGYQA) the chain is on the extracellular side. Residues 410–430 (AALCVALCFGIGGGTFVGLVL) traverse the membrane as a helical segment. Over 431–488 (KLPIWGDPADEHCFNDEMYWEVPEDEESIIPPVLSYNNHMIPNNKHEEMRETNFAEQS) the chain is Cytoplasmic.

Belongs to the ammonium transporter (TC 2.A.49) family. Rh subfamily. Homotrimer. In terms of tissue distribution, at larval stages, expressed only in the yolk sac and gill. However, the kidney and the gills are major sites of expression in adults.

Its subcellular location is the apical cell membrane. Functions as an ammonia transporter. May play a role in the elimination of ammonia in the gill. This chain is Ammonium transporter Rh type C-like 2 (rhcgl2), found in Danio rerio (Zebrafish).